The sequence spans 348 residues: Phospho-2-dehydro-3-deoxyheptonate aldolase, Trp-sensitive (348 aa).

The protein belongs to the class-I DAHP synthase family.

It catalyses the reaction D-erythrose 4-phosphate + phosphoenolpyruvate + H2O = 7-phospho-2-dehydro-3-deoxy-D-arabino-heptonate + phosphate. It participates in metabolic intermediate biosynthesis; chorismate biosynthesis; chorismate from D-erythrose 4-phosphate and phosphoenolpyruvate: step 1/7. Its function is as follows. Stereospecific condensation of phosphoenolpyruvate (PEP) and D-erythrose-4-phosphate (E4P) giving rise to 3-deoxy-D-arabino-heptulosonate-7-phosphate (DAHP). This Shigella flexneri protein is Phospho-2-dehydro-3-deoxyheptonate aldolase, Trp-sensitive (aroH).